The following is a 74-amino-acid chain: Guanine nucleotide-binding protein G(T) subunit gamma-T1 (74 aa).

Position 71 is a cysteine methyl ester (cysteine 71). A lipid anchor (S-farnesyl cysteine) is attached at cysteine 71. Residues 72–74 constitute a propeptide, removed in mature form; sequence VIS.

Belongs to the G protein gamma family. G proteins are composed of 3 units, alpha, beta and gamma. As to expression, retinal rod outer segment.

The protein resides in the cell membrane. Its function is as follows. Guanine nucleotide-binding proteins (G proteins) are involved as a modulator or transducer in various transmembrane signaling systems. The beta and gamma chains are required for the GTPase activity, for replacement of GDP by GTP, and for G protein-effector interaction. In Canis lupus familiaris (Dog), this protein is Guanine nucleotide-binding protein G(T) subunit gamma-T1 (GNGT1).